The following is a 355-amino-acid chain: Alkanal monooxygenase alpha chain (355 aa).

It belongs to the bacterial luciferase oxidoreductase family. Heterodimer of an alpha and a beta chain.

It carries out the reaction a long-chain fatty aldehyde + FMNH2 + O2 = a long-chain fatty acid + hnu + FMN + H2O + 2 H(+). Its function is as follows. Light-emitting reaction in luminous bacteria. In Vibrio harveyi (Beneckea harveyi), this protein is Alkanal monooxygenase alpha chain (luxA).